Here is a 681-residue protein sequence, read N- to C-terminus: Serine/threonine-protein kinase PAK 6 (681 aa).

4 disordered regions span residues 1–30 (MFRK…DPKE), 149–169 (GGTP…PRVL), 200–256 (QSSP…ESSL), and 268–355 (TAAT…PRTW). A CRIB domain is found at 12-25 (ISAPQNFQHRVHTS). The segment at 26–406 (FDPKEGKFVG…VVDQGDPRLL (381 aa)) is linker. 2 stretches are compositionally biased toward low complexity: residues 201–212 (SSPPGASPPTGT) and 268–278 (TAATAPPSSSK). Polar residues predominate over residues 308-333 (SLPSDQPVGTFSPLTTSDTSSPQKSL). Residues 407–658 (LDSYVKIGEG…AQELLDHPFL (252 aa)) form the Protein kinase domain. Residues 413 to 421 (IGEGSTGIV) and K436 each bind ATP. The active-site Proton acceptor is D526. At S560 the chain carries Phosphoserine; by autocatalysis.

This sequence belongs to the protein kinase superfamily. STE Ser/Thr protein kinase family. STE20 subfamily. In terms of assembly, interacts tightly with GTP-bound but not GDP-bound CDC42/p21 and RAC1. Interacts with the androgen receptor AR and the estrogen receptor ESR1. Interacts with IQGAP1 and PPM1B. In terms of processing, autophosphorylated. Phosphorylated by MAP2K6//MAPKK6, leading to PAK6 activation. As to expression, selectively expressed in brain and testis, with lower levels in multiple tissues including prostate and breast.

Its subcellular location is the cytoplasm. It is found in the nucleus. The catalysed reaction is L-seryl-[protein] + ATP = O-phospho-L-seryl-[protein] + ADP + H(+). It catalyses the reaction L-threonyl-[protein] + ATP = O-phospho-L-threonyl-[protein] + ADP + H(+). Its function is as follows. Serine/threonine protein kinase that plays a role in the regulation of gene transcription. The kinase activity is induced by various effectors including AR or MAP2K6/MAPKK6. Phosphorylates the DNA-binding domain of androgen receptor/AR and thereby inhibits AR-mediated transcription. Also inhibits ESR1-mediated transcription. May play a role in cytoskeleton regulation by interacting with IQGAP1. May protect cells from apoptosis through phosphorylation of BAD. The chain is Serine/threonine-protein kinase PAK 6 (PAK6) from Homo sapiens (Human).